Reading from the N-terminus, the 702-residue chain is MPRQIELDKVRNIGIIAHIDAGKTTTTERILFYTGRTYKIGEVHEGTATMDWMPQEQERGITITAAATTAPWRLDGVEYRINIIDTPGHVDFTVEVERSLRVLDGGVVVFDGVAGVEPQSETVWRQADKYNVPRICFVNKMDRVGASFERCVQMIKDRLGAKPAIVQLPIGVEDSFRGTIDLFKMKATVYYDDLGKDIREEEIPAELRPAAEQARNELIEMIAETDDELTLLYLEGQELTVEELKRGLRKATIERKLVPVLCGAALRNKGVQKLLDAVVEYLPSPLDRPAITGTLPGQVMGDEGVEVITRPVSDDAPFTALVFKIVADPYVGKLAYFRVYAGKITKGSYVLNSTRNQRERLGRILRMHANHREDIEEVYAGEIAAMVGPKNSYTGDTICDPDHPIVLESIRFPEPVIELAVEPKTKADQDKMSIALSRLAEEDPTFRVYTDPETGQTIIKGMGELHLEVILDRMRREYKVEANQGKPQVSYRETITIPVDQETRFVRQTGGKGQYGHVKIKFEPLPPGSGFEFVNAIVGGVIPKEYIPAVEQGLREAMQTGVIAGYPVVDVKATLYDGSYHEVDSSEMAFKIAASMCLKDAVRRGKPQLLEPIMKVETVTPEEFLGTVIGDFNSRRGRIEGMEARGNAQVVRAFVPLANMFGYMTDLRSATQGRATSSMEFDHYEPLPEALAKEIIEKRSAN.

The tr-type G domain occupies 8–286; sequence DKVRNIGIIA…AVVEYLPSPL (279 aa). GTP-binding positions include 17 to 24, 85 to 89, and 139 to 142; these read AHIDAGKT, DTPGH, and NKMD.

The protein belongs to the TRAFAC class translation factor GTPase superfamily. Classic translation factor GTPase family. EF-G/EF-2 subfamily.

Its subcellular location is the cytoplasm. Catalyzes the GTP-dependent ribosomal translocation step during translation elongation. During this step, the ribosome changes from the pre-translocational (PRE) to the post-translocational (POST) state as the newly formed A-site-bound peptidyl-tRNA and P-site-bound deacylated tRNA move to the P and E sites, respectively. Catalyzes the coordinated movement of the two tRNA molecules, the mRNA and conformational changes in the ribosome. This chain is Elongation factor G, found in Chloroflexus aurantiacus (strain ATCC 29366 / DSM 635 / J-10-fl).